The following is a 652-amino-acid chain: Chaperone protein HtpG (652 aa).

Residues 1-351 (MTEHVEQLEF…AQDLSLNVSR (351 aa)) form an a; substrate-binding region. The b stretch occupies residues 352–568 (EILQQDRQIQ…VFDFTPMLER (217 aa)). The tract at residues 569-652 (MYRASGQPVP…ILTDRLTRTL (84 aa)) is c.

The protein belongs to the heat shock protein 90 family. As to quaternary structure, homodimer.

It is found in the cytoplasm. Molecular chaperone. Has ATPase activity. The polypeptide is Chaperone protein HtpG (Nocardia farcinica (strain IFM 10152)).